The sequence spans 85 residues: UPF0386 protein RL2079 (85 aa).

The protein belongs to the UPF0386 family.

This chain is UPF0386 protein RL2079, found in Rhizobium johnstonii (strain DSM 114642 / LMG 32736 / 3841) (Rhizobium leguminosarum bv. viciae).